Here is a 143-residue protein sequence, read N- to C-terminus: Large ribosomal subunit protein uL11 (143 aa).

The protein belongs to the universal ribosomal protein uL11 family. In terms of assembly, part of the ribosomal stalk of the 50S ribosomal subunit. Interacts with L10 and the large rRNA to form the base of the stalk. L10 forms an elongated spine to which L12 dimers bind in a sequential fashion forming a multimeric L10(L12)X complex. One or more lysine residues are methylated.

Its function is as follows. Forms part of the ribosomal stalk which helps the ribosome interact with GTP-bound translation factors. The polypeptide is Large ribosomal subunit protein uL11 (Pseudomonas paraeruginosa (strain DSM 24068 / PA7) (Pseudomonas aeruginosa (strain PA7))).